A 323-amino-acid polypeptide reads, in one-letter code: tRNA U34 carboxymethyltransferase (323 aa).

Carboxy-S-adenosyl-L-methionine contacts are provided by residues lysine 91, tryptophan 105, lysine 110, glycine 130, aspartate 152 to threonine 154, isoleucine 181 to glutamate 182, methionine 196, tyrosine 200, and arginine 315.

Belongs to the class I-like SAM-binding methyltransferase superfamily. CmoB family. In terms of assembly, homotetramer.

It carries out the reaction carboxy-S-adenosyl-L-methionine + 5-hydroxyuridine(34) in tRNA = 5-carboxymethoxyuridine(34) in tRNA + S-adenosyl-L-homocysteine + H(+). In terms of biological role, catalyzes carboxymethyl transfer from carboxy-S-adenosyl-L-methionine (Cx-SAM) to 5-hydroxyuridine (ho5U) to form 5-carboxymethoxyuridine (cmo5U) at position 34 in tRNAs. The polypeptide is tRNA U34 carboxymethyltransferase (Photorhabdus laumondii subsp. laumondii (strain DSM 15139 / CIP 105565 / TT01) (Photorhabdus luminescens subsp. laumondii)).